The primary structure comprises 288 residues: Probable ketoamine kinase PM0587 (288 aa).

ATP is bound at residue 92-94; that stretch reads EAL.

Belongs to the fructosamine kinase family.

Functionally, ketoamine kinase that phosphorylates ketoamines on the third carbon of the sugar moiety to generate ketoamine 3-phosphate. This Pasteurella multocida (strain Pm70) protein is Probable ketoamine kinase PM0587.